We begin with the raw amino-acid sequence, 125 residues long: Small ribosomal subunit protein eS8 (125 aa).

It belongs to the eukaryotic ribosomal protein eS8 family. In terms of assembly, part of the 30S ribosomal subunit.

This Methanosarcina mazei (strain ATCC BAA-159 / DSM 3647 / Goe1 / Go1 / JCM 11833 / OCM 88) (Methanosarcina frisia) protein is Small ribosomal subunit protein eS8.